A 999-amino-acid polypeptide reads, in one-letter code: Helicase required for RNAi-mediated heterochromatin assembly 1 (999 aa).

The tract at residues Glu61–Arg90 is disordered. The segment covering Lys70–Ser88 has biased composition (basic and acidic residues). At Ser94 the chain carries Phosphoserine. Residues Arg106 to Ala124 are compositionally biased toward basic and acidic residues. The interval Arg106 to Arg131 is disordered. ATP is bound at residue Gly393–Ser400.

As to quaternary structure, cid12, hrr1 and rdp1 interact forming the RNA-directed RNA polymerase complex (RDRC). The RDRC complex interacts with the RITS complex via interaction between ago1 and hrr1. Clr4 has a role in mediating this interaction.

The protein localises to the cytoplasm. It localises to the nucleus. The enzyme catalyses ATP + H2O = ADP + phosphate + H(+). In terms of biological role, has a role in the RNA interference (RNAi) pathway which is important for heterochromatin formation and accurate chromosome segregation. A member of the RNA-directed RNA polymerase complex (RDRC) which is involved in the generation of small interfering RNAs (siRNAs) and mediate their association with the RNA-induced transcriptional silencing (RITS) complex. RITS acts as a priming complex for dsRNA synthesis at the site of non-coding centromeric RNA. The protein is Helicase required for RNAi-mediated heterochromatin assembly 1 (hrr1) of Schizosaccharomyces pombe (strain 972 / ATCC 24843) (Fission yeast).